A 371-amino-acid polypeptide reads, in one-letter code: Cytochrome b (371 aa).

4 helical membrane-spanning segments follow: residues 25–45 (FGSM…FLAV), 69–90 (WMMQ…YIHI), 105–125 (WMSG…GYVL), and 170–190 (FFAL…LHII). Residues His75 and His89 each coordinate heme b. 2 residues coordinate heme b: His174 and His188. His193 is an a ubiquinone binding site. 4 consecutive transmembrane segments (helical) span residues 218–238 (HKDL…VSFS), 280–300 (LGGA…PFTH), 312–332 (LSQL…WAAT), and 339–358 (FIII…LSIP).

It belongs to the cytochrome b family. The cytochrome bc1 complex contains 3 respiratory subunits (MT-CYB, CYC1 and UQCRFS1), 2 core proteins (UQCRC1 and UQCRC2) and probably 6 low-molecular weight proteins. It depends on heme b as a cofactor.

It is found in the mitochondrion inner membrane. Component of the ubiquinol-cytochrome c reductase complex (complex III or cytochrome b-c1 complex) that is part of the mitochondrial respiratory chain. The b-c1 complex mediates electron transfer from ubiquinol to cytochrome c. Contributes to the generation of a proton gradient across the mitochondrial membrane that is then used for ATP synthesis. This chain is Cytochrome b (MT-CYB), found in Antaresia childreni (Children's python).